The following is a 1609-amino-acid chain: Probable cation-transporting ATPase I (1609 aa).

The next 10 helical transmembrane spans lie at 30–50, 176–196, 238–258, 357–377, 641–661, 673–693, 778–798, 921–941, 969–989, and 997–1017; these read GAVNTMQMLASPVAEFAWPVV, LAILMPLTAAVMDLVALSAAV, IALSITTAAASGLTQAVGTPL, LIAAASALLAGGGTEDAAGAI, VHLAQGGTTLAGLLLITASAG, WFSPVNAAAATALVTGVVSAS, ILAVGAAASAIVGSNIDALLV, LFEGSAIVAGHARAIVVATGV, TSKVLPLTLAGGAAVTGLALL, and AVADGVAIAVAAVPEGLPLVA. Aspartate 1053 functions as the 4-aspartylphosphate intermediate in the catalytic mechanism. Positions 1335 and 1339 each coordinate Mg(2+). 2 consecutive transmembrane segments (helical) span residues 1396–1416 and 1426–1446; these read ILVGGNVGEVVFTIIGTVFGA and LLLVNLLTDMFPALSIAVTSQ. Residues 1447-1476 are disordered; that stretch reads YEEPGEDEYQTDEEADEARRTHQHEVLTGP. Over residues 1449-1462 the composition is skewed to acidic residues; it reads EPGEDEYQTDEEAD. 2 helical membrane-spanning segments follow: residues 1542–1562 and 1573–1593; these read VVATALGSAGVLIGIIQTPVI and PIAWSGVITATAGATAVSVLA.

This sequence belongs to the cation transport ATPase (P-type) (TC 3.A.3) family.

Its subcellular location is the cell membrane. It catalyses the reaction ATP + H2O = ADP + phosphate + H(+). This Mycobacterium leprae (strain TN) protein is Probable cation-transporting ATPase I (ctpI).